Here is a 945-residue protein sequence, read N- to C-terminus: Probable inorganic carbon transporter subunit DabA (945 aa).

Cys408, Asp410, His651, and Cys666 together coordinate Zn(2+).

This sequence belongs to the inorganic carbon transporter (TC 9.A.2) DabA family. As to quaternary structure, forms a complex with DabB. The cofactor is Zn(2+).

The protein localises to the cell inner membrane. Functionally, part of an energy-coupled inorganic carbon pump. The protein is Probable inorganic carbon transporter subunit DabA of Sulfurihydrogenibium azorense (strain DSM 15241 / OCM 825 / Az-Fu1).